The primary structure comprises 611 residues: Dolabella-3,7-dien-18-ol synthase TPS06 (611 aa).

5 residues coordinate Mg(2+): Asp363, Asp367, Asp507, Thr511, and Glu515. Positions 363–367 (DNTFD) match the DDXXD motif; degenerate motif.

It belongs to the terpene synthase family. Tpsa subfamily. It depends on Mg(2+) as a cofactor. Mn(2+) is required as a cofactor. Predominantly expressed in flowers but also in stems, siliques, roots and leaves.

Its subcellular location is the cytoplasm. The catalysed reaction is (2E,6E,10E)-geranylgeranyl diphosphate + H2O = (3E,7E)-dolabella-3,7-dien-18-ol + diphosphate. The protein operates within secondary metabolite biosynthesis; terpenoid biosynthesis. Involved in terpene biosynthesis in roots. Possesses sesquiterpene (C15) synthase activity and diterpene (C20) synthase activity in vitro. Possesses dolabella-3,7-dien-18-ol synthase activity in vitro. Catalyzes the formation of dolabella-3,7-dien-18-ol from geranylgeranyl diphosphate. This chain is Dolabella-3,7-dien-18-ol synthase TPS06, found in Arabidopsis thaliana (Mouse-ear cress).